A 277-amino-acid polypeptide reads, in one-letter code: Pantothenate synthetase (277 aa).

Residue 26–33 coordinates ATP; that stretch reads MGNLHAGH. The active-site Proton donor is the histidine 33. Glutamine 57 contributes to the (R)-pantoate binding site. Glutamine 57 provides a ligand contact to beta-alanine. Residue 143 to 146 coordinates ATP; sequence GEKD. Glutamine 149 serves as a coordination point for (R)-pantoate. Residues valine 172 and 180–183 each bind ATP; that span reads LSSR.

Belongs to the pantothenate synthetase family. Homodimer.

The protein localises to the cytoplasm. The enzyme catalyses (R)-pantoate + beta-alanine + ATP = (R)-pantothenate + AMP + diphosphate + H(+). It participates in cofactor biosynthesis; (R)-pantothenate biosynthesis; (R)-pantothenate from (R)-pantoate and beta-alanine: step 1/1. Catalyzes the condensation of pantoate with beta-alanine in an ATP-dependent reaction via a pantoyl-adenylate intermediate. This is Pantothenate synthetase from Nitrosomonas europaea (strain ATCC 19718 / CIP 103999 / KCTC 2705 / NBRC 14298).